The chain runs to 20 residues: Photosystem II stability/assembly factor HCF136, chloroplastic (20 aa).

The protein belongs to the Ycf48 family.

It localises to the plastid. Its subcellular location is the chloroplast thylakoid lumen. Its function is as follows. Essential for photosystem II (PSII) biogenesis; required for assembly of an early intermediate in PSII assembly that includes D2 (psbD) and cytochrome b559. In Spinacia oleracea (Spinach), this protein is Photosystem II stability/assembly factor HCF136, chloroplastic.